A 408-amino-acid polypeptide reads, in one-letter code: 5-hydroxytryptamine receptor 1A (408 aa).

The Extracellular portion of the chain corresponds to 1 to 32 (MDASNNTTSWNILQRGRMGPSWRRCPVSYQII). 2 N-linked (GlcNAc...) asparagine glycosylation sites follow: asparagine 5 and asparagine 6. Residues 33–53 (ASLFLGRSFSAGIFGNACVIA) form a helical membrane-spanning segment. The Cytoplasmic portion of the chain corresponds to 54–67 (AIALERSLQNVANY). The helical transmembrane segment at 68 to 92 (LIGSLAVTDLMVSVLVLPMAAQNQV) threads the bilayer. Residues 93–101 (LNKWTLGQV) lie on the Extracellular side of the membrane. A helical transmembrane segment spans residues 102-126 (TCDIFISLDVLCCTSSILHLCAIAL). Residues cysteine 103 and cysteine 181 are joined by a disulfide bond. Serotonin contacts are provided by aspartate 110 and cysteine 114. A DRY motif; important for ligand-induced conformation changes motif is present at residues 127–129 (DRY). Residues 127–146 (DRYWAITDPIDYVNKRTPRR) are Cytoplasmic-facing. The helical transmembrane segment at 147 to 168 (AAVLISITWIVGFSISIPPMLG) threads the bilayer. Residues 169 to 187 (WRTPEDRSDPNACRISEDP) are Extracellular-facing. Residues 188–210 (GYTIYSTFGAFYIPLILMLVLYG) form a helical membrane-spanning segment. Topologically, residues 211–333 (KIFKAARFRI…LARERKTVKT (123 aa)) are cytoplasmic. The disordered stretch occupies residues 235–255 (TCLSVSQQSPKEKQRGAQQEL). Lysine 332, threonine 333, and glycine 339 together coordinate 1D-myo-inositol 4-phosphate. The helical transmembrane segment at 334–357 (LGIIMGTFILCWLPFFIVALVLPF) threads the bilayer. Topologically, residues 358–364 (CETCHMP) are extracellular. Residues 365–389 (HLLFDIITWLGYSNSLLNPIIYAYF) traverse the membrane as a helical segment. The NPxxY motif; important for ligand-induced conformation changes and signaling signature appears at 382 to 386 (NPIIY). 1D-myo-inositol 4-phosphate contacts are provided by phenylalanine 389, asparagine 390, and lysine 391. The Cytoplasmic segment spans residues 390–408 (NKDFQSAFKKIIKCKFCRQ).

This sequence belongs to the G-protein coupled receptor 1 family. 5-hydroxytryptamine receptor subfamily. HTR1A sub-subfamily. First expressed in the rostral part of the brain stem at stage 22. At later stages of development, expression is localized to serotonergic neurons. The expression pattern changes in the tadpole of stage 41 where, in addition to serotonergic neurons, expression is also localized to the inner nuclear layer (INL) of the developing retina. This expression pattern continues through to the start of metamorphosis (stage 46). In adults, expressed in the brain, in particular the telencephalon, diencephalon and mesencephalon. In the telencephalic region, expression is localized to the lateral, dorsal and medial pallium, and in the striatum, septum and amygdala. In the mesencephalic region, expression is strongest in the optic tectum and torus semicircularis with moderate levels of expression in tegmental nuclei. In diencephalon, localized to the dorsal and ventral thalamus and the preoptic area of the hypothalamus.

Its subcellular location is the cell membrane. G-protein coupled receptor activity is regulated by lipids: phosphatidylinositol 4-phosphate increases HTR1A-mediated activity. G-protein coupled receptor for 5-hydroxytryptamine (serotonin). Also functions as a receptor for various drugs and psychoactive substances. Ligand binding causes a conformation change that triggers signaling via guanine nucleotide-binding proteins (G proteins) and modulates the activity of downstream effectors, such as adenylate cyclase. HTR1A is coupled to G(i)/G(o) G alpha proteins and mediates inhibitory neurotransmission: signaling inhibits adenylate cyclase activity and activates a phosphatidylinositol-calcium second messenger system that regulates the release of Ca(2+) ions from intracellular stores. Beta-arrestin family members regulate signaling by mediating both receptor desensitization and resensitization processes. Activation of the receptor may play a role in the exit from G0 phase and in promoting DNA synthesis. The polypeptide is 5-hydroxytryptamine receptor 1A (Xenopus laevis (African clawed frog)).